Reading from the N-terminus, the 273-residue chain is Cell division protein ZipA (273 aa).

A topological domain (periplasmic) is located at residue Met-1. A helical transmembrane segment spans residues 2-22 (EFGLREWLIVIGIIVIAGILF). Residues 23 to 273 (DGWRRMRGGK…FERRQLTQKR (251 aa)) lie on the Cytoplasmic side of the membrane. The tract at residues 65–125 (EMEPQLDEDD…QEPKKSAKLS (61 aa)) is disordered. A compositionally biased stretch (basic and acidic residues) spans 111–120 (VDDKPQEPKK).

The protein belongs to the ZipA family. As to quaternary structure, interacts with FtsZ via their C-terminal domains.

It is found in the cell inner membrane. Its function is as follows. Essential cell division protein that stabilizes the FtsZ protofilaments by cross-linking them and that serves as a cytoplasmic membrane anchor for the Z ring. Also required for the recruitment to the septal ring of downstream cell division proteins. The chain is Cell division protein ZipA from Ectopseudomonas mendocina (strain ymp) (Pseudomonas mendocina).